Consider the following 298-residue polypeptide: Mitochondrial 2-oxodicarboxylate carrier (298 aa).

Solcar repeat units lie at residues 10–99 (HETC…YKKF), 106–195 (SPGL…VKDN), and 204–293 (LEFL…TYAW). 6 helical membrane-spanning segments follow: residues 16 to 36 (VAAG…LDVV), 69 to 88 (FGFY…KRAV), 112 to 132 (PIAG…FEVV), 166 to 186 (GLNK…MTYF), 204 to 224 (LEFL…SVFN), and 276 to 296 (LGPG…WLQE).

Belongs to the mitochondrial carrier (TC 2.A.29) family. Widely expressed.

The protein localises to the mitochondrion inner membrane. It carries out the reaction 2-oxoadipate(in) + 2-oxoglutarate(out) = 2-oxoadipate(out) + 2-oxoglutarate(in). It catalyses the reaction hexanedioate(in) + 2-oxoglutarate(out) = hexanedioate(out) + 2-oxoglutarate(in). The enzyme catalyses L-2-aminoadipate(in) + 2-oxoglutarate(out) = L-2-aminoadipate(out) + 2-oxoglutarate(in). The catalysed reaction is glutarate(in) + 2-oxoglutarate(out) = glutarate(out) + 2-oxoglutarate(in). It carries out the reaction 2-oxoheptanedioate(in) + 2-oxoglutarate(out) = 2-oxoheptanedioate(out) + 2-oxoglutarate(in). It catalyses the reaction heptanedioate(in) + 2-oxoglutarate(out) = heptanedioate(out) + 2-oxoglutarate(in). The enzyme catalyses citrate(in) + 2-oxoglutarate(out) = citrate(out) + 2-oxoglutarate(in). In terms of biological role, transports dicarboxylates across the inner membranes of mitochondria by a counter-exchange mechanism. Can transport 2-oxoadipate (2-oxohexanedioate), 2-oxoglutarate, adipate (hexanedioate), glutarate, and to a lesser extent, pimelate (heptanedioate), 2-oxopimelate (2-oxoheptanedioate), 2-aminoadipate (2-aminohexanedioate), oxaloacetate, and citrate. Plays a central role in catabolism of lysine, hydroxylysine, and tryptophan, by transporting common metabolite intermediates (such as 2-oxoadipate) into the mitochondria, where it is converted into acetyl-CoA and can enter the citric acid (TCA) cycle. The polypeptide is Mitochondrial 2-oxodicarboxylate carrier (Slc25a21) (Rattus norvegicus (Rat)).